The sequence spans 199 residues: MAVAGPEIERLIQLLARLPGLGPRSARRAALHLIKKREALMVPLASAMQVAIERIQVCKTCGNIDTQSPCTVCTDPRRDPAMIVVVADVADLWALERAKASNGRYHVLGGTLSPLDGVGPQDLTIDALVQRAHAPEVSEIILALNATVDGQTTAHYITDLLQEANVKVTRLAHGVPVGGELDYLDEGTLSAAMRQRTLF.

The C4-type zinc-finger motif lies at 58–73 (CKTCGNIDTQSPCTVC). The 96-residue stretch at 81–176 (AMIVVVADVA…KVTRLAHGVP (96 aa)) folds into the Toprim domain.

This sequence belongs to the RecR family.

May play a role in DNA repair. It seems to be involved in an RecBC-independent recombinational process of DNA repair. It may act with RecF and RecO. This is Recombination protein RecR from Bradyrhizobium sp. (strain BTAi1 / ATCC BAA-1182).